The primary structure comprises 406 residues: MMQQQRLKQQQQQALMQQSLYHPGLLAPPQIEPILSGNLPPGFDSSTCRSVYVGNIHPQVTEPLLQEVFASTGPLEGCKLIRKDKSSYGFVDYFDRRSAALAIVTLNGRHLFGQPIKVNWAYASAQREDTSNHYNIFVGDLSPEVTDATLFACFSVYTSCSDARVMWDQKTGRSRGFGFVSFRNQQEAQSAINDLNGKWLGSRQIRCNWAAKGAGAVGEQNSDAKSVVELTSGTSDDGQEKVVNEDAPENNPQYTTVYVGNLAPEVTSVDLHRHFHALGAGVIEDVRIQRDKGFGFVRYSSHAEAARAIQLGNARLLFGKPVKCSWGSKPTPPGSSSNPLPPPAIGQIPGLSAMDLAAYQRQLALAKMAGAQAFMQPQGQRIGAPGQGIYDGGYGGIASTQPPMYF.

RRM domains follow at residues 49-123 (RSVY…WAYA) and 134-212 (YNIF…WAAK). A disordered region spans residues 231 to 250 (TSGTSDDGQEKVVNEDAPEN). One can recognise an RRM 3 domain in the interval 255 to 329 (TTVYVGNLAP…KPVKCSWGSK (75 aa)).

It localises to the nucleus. In terms of biological role, heterogeneous nuclear ribonucleoprotein (hnRNP)-like protein that acts as a component of the pre-mRNA processing machinery. Functions to facilitate the nuclear maturation of plant pre-mRNAs. Binds with high affinity to RNA molecules that contain AU-rich regions. May bind to the 3'-UTR and protects the mRNA against exonucleolytic degradation. Associates with nuclear poly(A)+ RNA in nucleus in vivo. Does not stimulate transcription or the 3' end cleavage/polyadenylation reaction. The protein is Oligouridylate-binding protein 1 (UBP1) of Nicotiana plumbaginifolia (Leadwort-leaved tobacco).